The sequence spans 345 residues: Aspartate-semialdehyde dehydrogenase (345 aa).

Residues T11–V14 and R39–S40 contribute to the NADP(+) site. R99 provides a ligand contact to phosphate. The Acyl-thioester intermediate role is filled by C130. A substrate-binding site is contributed by Q157. S160–G161 contacts NADP(+). Position 227 (K227) interacts with phosphate. R249 serves as a coordination point for substrate. H256 serves as the catalytic Proton acceptor. N325 contacts NADP(+).

This sequence belongs to the aspartate-semialdehyde dehydrogenase family. In terms of assembly, homodimer.

It carries out the reaction L-aspartate 4-semialdehyde + phosphate + NADP(+) = 4-phospho-L-aspartate + NADPH + H(+). The protein operates within amino-acid biosynthesis; L-lysine biosynthesis via DAP pathway; (S)-tetrahydrodipicolinate from L-aspartate: step 2/4. It functions in the pathway amino-acid biosynthesis; L-methionine biosynthesis via de novo pathway; L-homoserine from L-aspartate: step 2/3. It participates in amino-acid biosynthesis; L-threonine biosynthesis; L-threonine from L-aspartate: step 2/5. Its function is as follows. Catalyzes the NADPH-dependent formation of L-aspartate-semialdehyde (L-ASA) by the reductive dephosphorylation of L-aspartyl-4-phosphate. This chain is Aspartate-semialdehyde dehydrogenase, found in Mycobacterium bovis (strain ATCC BAA-935 / AF2122/97).